We begin with the raw amino-acid sequence, 365 residues long: Succinyl-diaminopimelate desuccinylase (365 aa).

Residue His-65 coordinates Zn(2+). Residue Asp-67 is part of the active site. Position 96 (Asp-96) interacts with Zn(2+). Glu-126 (proton acceptor) is an active-site residue. Residues Glu-127, Glu-155, and His-340 each contribute to the Zn(2+) site.

It belongs to the peptidase M20A family. DapE subfamily. As to quaternary structure, homodimer. Requires Zn(2+) as cofactor. Co(2+) serves as cofactor.

It catalyses the reaction N-succinyl-(2S,6S)-2,6-diaminopimelate + H2O = (2S,6S)-2,6-diaminopimelate + succinate. It participates in amino-acid biosynthesis; L-lysine biosynthesis via DAP pathway; LL-2,6-diaminopimelate from (S)-tetrahydrodipicolinate (succinylase route): step 3/3. Its function is as follows. Catalyzes the hydrolysis of N-succinyl-L,L-diaminopimelic acid (SDAP), forming succinate and LL-2,6-diaminopimelate (DAP), an intermediate involved in the bacterial biosynthesis of lysine and meso-diaminopimelic acid, an essential component of bacterial cell walls. The chain is Succinyl-diaminopimelate desuccinylase from Campylobacter jejuni subsp. jejuni serotype O:6 (strain 81116 / NCTC 11828).